Reading from the N-terminus, the 436-residue chain is GTPase Der (436 aa).

EngA-type G domains lie at 3–168 (PLIA…PESD) and 177–352 (IRLA…DNRA). GTP is bound by residues 9–16 (GRPNVGKS), 56–60 (DTGGY), 120–123 (NKVE), 183–190 (GRPNVGKS), 230–234 (DTAGL), and 295–298 (NKWD). Positions 353 to 436 (RKISTSALNR…VTISLRFLQK (84 aa)) constitute a KH-like domain.

It belongs to the TRAFAC class TrmE-Era-EngA-EngB-Septin-like GTPase superfamily. EngA (Der) GTPase family. As to quaternary structure, associates with the 50S ribosomal subunit.

Functionally, GTPase that plays an essential role in the late steps of ribosome biogenesis. In Chlorobium phaeovibrioides (strain DSM 265 / 1930) (Prosthecochloris vibrioformis (strain DSM 265)), this protein is GTPase Der.